The primary structure comprises 188 residues: Elongation factor P (188 aa).

The protein belongs to the elongation factor P family.

It localises to the cytoplasm. Its pathway is protein biosynthesis; polypeptide chain elongation. Involved in peptide bond synthesis. Stimulates efficient translation and peptide-bond synthesis on native or reconstituted 70S ribosomes in vitro. Probably functions indirectly by altering the affinity of the ribosome for aminoacyl-tRNA, thus increasing their reactivity as acceptors for peptidyl transferase. This is Elongation factor P from Exiguobacterium sibiricum (strain DSM 17290 / CCUG 55495 / CIP 109462 / JCM 13490 / 255-15).